The chain runs to 75 residues: Small ribosomal subunit protein bS16 (75 aa).

The protein belongs to the bacterial ribosomal protein bS16 family.

This chain is Small ribosomal subunit protein bS16, found in Aliarcobacter butzleri (strain RM4018) (Arcobacter butzleri).